The following is a 1106-amino-acid chain: Protein transport protein Sec31A (1106 aa).

7 WD repeats span residues 4 to 47 (KEVD…EIFE), 68 to 111 (RYHK…AGDK), 120 to 160 (KHTG…TPMT), 166 to 206 (QPPE…PIIK), 209 to 254 (DHSN…SPLR), 258 to 298 (NHAR…VLYE), and 301 to 342 (TNTQ…DGLR). The tract at residues 161-471 (PGAKTQPPED…IDASQTEFEK (311 aa)) is interaction with SEC13. The WD 8; interaction with SEC13 repeat unit spans residues 397-430 (SFSFGGKLVTFENVRMPSHQGAEQQQQQHHVFIS). Phosphoserine occurs at positions 527 and 532. A Glycyl lysine isopeptide (Lys-Gly) (interchain with G-Cter in ubiquitin) cross-link involves residue lysine 647. Serine 799 bears the Phosphoserine mark. Residues 800–999 (PKIPYEEQQL…TKKITKKPIP (200 aa)) are interaction with PDCD6. The ALG-2-binding site motif-2 (ABS-2) motif lies at 842 to 848 (GFIMHGN). A disordered region spans residues 859–980 (TSPGHMHTQV…EGAPGAPIGN (122 aa)). The span at 917–939 (PQSQMLQQQPSAPVPLSSQSSFP) shows a compositional bias: polar residues. Position 1047 is a phosphothreonine (threonine 1047). At serine 1049 the chain carries Phosphoserine. Lysine 1103 participates in a covalent cross-link: Glycyl lysine isopeptide (Lys-Gly) (interchain with G-Cter in ubiquitin).

This sequence belongs to the WD repeat SEC31 family. In terms of assembly, COPII is composed of at least 5 proteins: the SEC23/24 complex, the SEC13/31 complex and SAR1. SEC13 and SEC31 make a 2:2 tetramer that forms the edge element of the COPII outer coat. The tetramer self-assembles in multiple copies to form the complete polyhedral cage. Interacts (via WD 8) with SEC13. Interacts with PDCD6; interaction takes place in response to cytosolic calcium increase and leads to bridge together the BCR(KLHL12) complex and SEC31A, leading to monoubiquitination. Interacts with KLHL12. Monoubiquitinated by the BCR(KLHL12) E3 ubiquitin ligase complex, leading to regulate the size of COPII coats.

The protein resides in the cytoplasm. It localises to the cytoplasmic vesicle. It is found in the COPII-coated vesicle membrane. Its subcellular location is the endoplasmic reticulum membrane. In terms of biological role, component of the coat protein complex II (COPII) which promotes the formation of transport vesicles from the endoplasmic reticulum (ER). The coat has two main functions, the physical deformation of the endoplasmic reticulum membrane into vesicles and the selection of cargo molecules. This chain is Protein transport protein Sec31A (SEC31A), found in Pongo abelii (Sumatran orangutan).